Here is a 161-residue protein sequence, read N- to C-terminus: Small ribosomal subunit protein uS9 (161 aa).

Belongs to the universal ribosomal protein uS9 family.

The sequence is that of Small ribosomal subunit protein uS9 from Methylobacterium radiotolerans (strain ATCC 27329 / DSM 1819 / JCM 2831 / NBRC 15690 / NCIMB 10815 / 0-1).